Reading from the N-terminus, the 295-residue chain is Light-independent protochlorophyllide reductase iron-sulfur ATP-binding protein (295 aa).

ATP contacts are provided by residues 39–44 and K68; that span reads GIGKST. S43 contacts Mg(2+). Residues C124 and C158 each contribute to the [4Fe-4S] cluster site. Residue 209–210 participates in ATP binding; sequence NR.

This sequence belongs to the NifH/BchL/ChlL family. In terms of assembly, homodimer. Protochlorophyllide reductase is composed of three subunits; ChlL, ChlN and ChlB. It depends on [4Fe-4S] cluster as a cofactor.

The catalysed reaction is chlorophyllide a + oxidized 2[4Fe-4S]-[ferredoxin] + 2 ADP + 2 phosphate = protochlorophyllide a + reduced 2[4Fe-4S]-[ferredoxin] + 2 ATP + 2 H2O. It functions in the pathway porphyrin-containing compound metabolism; chlorophyll biosynthesis (light-independent). In terms of biological role, component of the dark-operative protochlorophyllide reductase (DPOR) that uses Mg-ATP and reduced ferredoxin to reduce ring D of protochlorophyllide (Pchlide) to form chlorophyllide a (Chlide). This reaction is light-independent. The L component serves as a unique electron donor to the NB-component of the complex, and binds Mg-ATP. This is Light-independent protochlorophyllide reductase iron-sulfur ATP-binding protein from Prochlorococcus marinus (strain MIT 9215).